The sequence spans 473 residues: RuvB-like helicase 2 (473 aa).

Gly-76–Thr-83 lines the ATP pocket.

The protein belongs to the RuvB family. In terms of assembly, may form heterododecamers with RVB1. Component of the SWR1 chromatin remodeling complex, the INO80 chromatin remodeling complex, and of the R2TP complex.

Its subcellular location is the nucleus. It catalyses the reaction ATP + H2O = ADP + phosphate + H(+). In terms of biological role, DNA helicase which participates in several chromatin remodeling complexes, including the SWR1 and the INO80 complexes. The SWR1 complex mediates the ATP-dependent exchange of histone H2A for the H2A variant HZT1 leading to transcriptional regulation of selected genes by chromatin remodeling. The INO80 complex remodels chromatin by shifting nucleosomes and is involved in DNA repair. Also involved in pre-rRNA processing. This Gibberella zeae (strain ATCC MYA-4620 / CBS 123657 / FGSC 9075 / NRRL 31084 / PH-1) (Wheat head blight fungus) protein is RuvB-like helicase 2 (RVB2).